The sequence spans 258 residues: UDP-2,3-diacylglucosamine hydrolase (258 aa).

The Mn(2+) site is built by Asp-15, His-17, Asp-48, Asn-88, and His-123. 88 to 89 (NR) contacts substrate. Substrate is bound by residues Asp-131, Ser-169, Asn-173, Lys-176, and His-204. The Mn(2+) site is built by His-204 and His-206.

The protein belongs to the LpxH family. Requires Mn(2+) as cofactor.

It localises to the cell inner membrane. It carries out the reaction UDP-2-N,3-O-bis[(3R)-3-hydroxytetradecanoyl]-alpha-D-glucosamine + H2O = 2-N,3-O-bis[(3R)-3-hydroxytetradecanoyl]-alpha-D-glucosaminyl 1-phosphate + UMP + 2 H(+). The protein operates within glycolipid biosynthesis; lipid IV(A) biosynthesis; lipid IV(A) from (3R)-3-hydroxytetradecanoyl-[acyl-carrier-protein] and UDP-N-acetyl-alpha-D-glucosamine: step 4/6. In terms of biological role, hydrolyzes the pyrophosphate bond of UDP-2,3-diacylglucosamine to yield 2,3-diacylglucosamine 1-phosphate (lipid X) and UMP by catalyzing the attack of water at the alpha-P atom. Involved in the biosynthesis of lipid A, a phosphorylated glycolipid that anchors the lipopolysaccharide to the outer membrane of the cell. This chain is UDP-2,3-diacylglucosamine hydrolase, found in Bordetella bronchiseptica (strain ATCC BAA-588 / NCTC 13252 / RB50) (Alcaligenes bronchisepticus).